We begin with the raw amino-acid sequence, 133 residues long: Large ribosomal subunit protein bL17 (133 aa).

Belongs to the bacterial ribosomal protein bL17 family. As to quaternary structure, part of the 50S ribosomal subunit. Contacts protein L32.

The protein is Large ribosomal subunit protein bL17 of Thermodesulfovibrio yellowstonii (strain ATCC 51303 / DSM 11347 / YP87).